The primary structure comprises 205 residues: SREBP regulating gene protein (205 aa).

The Cytoplasmic segment spans residues 1 to 16 (MVPCGAVLWRRLLRKR). The helical transmembrane segment at 17–35 (WVLGVVFGLSLVYFLSSTF) threads the bilayer. At 36–205 (KQEERTVRDR…GEYPPELLPV (170 aa)) the chain is on the lumenal side. An N-linked (GlcNAc...) asparagine glycan is attached at N67.

It belongs to the SPRING family.

The protein localises to the golgi apparatus membrane. Positively regulates hepatic SREBP signaling pathway by modulating the proper localization of SCAP (SREBP cleavage-activating protein) to the endoplasmic reticulum, thereby controlling the level of functional SCAP. The polypeptide is SREBP regulating gene protein (Gallus gallus (Chicken)).